The sequence spans 293 residues: Diaminopimelate epimerase (293 aa).

Asparagine 17, glutamine 49, and asparagine 69 together coordinate substrate. Cysteine 78 functions as the Proton donor in the catalytic mechanism. Substrate contacts are provided by residues 79-80, asparagine 169, asparagine 203, and 221-222; these read GN and ER. Cysteine 230 serves as the catalytic Proton acceptor. A substrate-binding site is contributed by 231-232; sequence GS.

This sequence belongs to the diaminopimelate epimerase family. In terms of assembly, homodimer.

Its subcellular location is the cytoplasm. The enzyme catalyses (2S,6S)-2,6-diaminopimelate = meso-2,6-diaminopimelate. The protein operates within amino-acid biosynthesis; L-lysine biosynthesis via DAP pathway; DL-2,6-diaminopimelate from LL-2,6-diaminopimelate: step 1/1. In terms of biological role, catalyzes the stereoinversion of LL-2,6-diaminopimelate (L,L-DAP) to meso-diaminopimelate (meso-DAP), a precursor of L-lysine and an essential component of the bacterial peptidoglycan. This Methylobacterium sp. (strain 4-46) protein is Diaminopimelate epimerase.